The following is a 513-amino-acid chain: GMP synthase [glutamine-hydrolyzing] (513 aa).

The region spanning 3-200 is the Glutamine amidotransferase type-1 domain; the sequence is SVLVLDFGSQ…LINIAGIRPD (198 aa). Residue Cys80 is the Nucleophile of the active site. Residues His174 and Glu176 contribute to the active site. In terms of domain architecture, GMPS ATP-PPase spans 201–388; sequence WSSKSFIEHQ…LGIPEDILMR (188 aa). ATP is bound at residue 228 to 234; sequence SGGVDST.

In terms of assembly, homodimer.

It catalyses the reaction XMP + L-glutamine + ATP + H2O = GMP + L-glutamate + AMP + diphosphate + 2 H(+). Its pathway is purine metabolism; GMP biosynthesis; GMP from XMP (L-Gln route): step 1/1. Its function is as follows. Catalyzes the synthesis of GMP from XMP. The polypeptide is GMP synthase [glutamine-hydrolyzing] (Chlorobium luteolum (strain DSM 273 / BCRC 81028 / 2530) (Pelodictyon luteolum)).